The primary structure comprises 376 residues: uncharacterized protein (376 aa).

The first 31 residues, Met-1 to Leu-31, serve as a signal peptide directing secretion. Residues Ser-37–Ser-57 form a disordered region.

It belongs to the bacterial solute-binding protein 1 family. WtpA subfamily.

This is an uncharacterized protein from Sulfurisphaera tokodaii (strain DSM 16993 / JCM 10545 / NBRC 100140 / 7) (Sulfolobus tokodaii).